Here is a 157-residue protein sequence, read N- to C-terminus: Regenerating islet-derived protein 4 (157 aa).

Residues 1–22 (MASKCVRLLLLLSWVAGPEVLS) form the signal peptide. C29 and C40 are joined by a disulfide. Residues 36–154 (YRSHCYGYFR…CTKRQHFLCK (119 aa)) form the C-type lectin domain. N-linked (GlcNAc...) asparagine glycans are attached at residues N49, N62, and N101. Disulfide bonds link C57/C153 and C128/C145. Residues 97 to 101 (DPQKN) and 134 to 136 (KDK) each bind a carbohydrate.

The protein resides in the secreted. Its function is as follows. Calcium-independent lectin displaying mannose-binding specificity and able to maintain carbohydrate recognition activity in an acidic environment. May be involved in inflammatory and metaplastic responses of the gastrointestinal epithelium. The protein is Regenerating islet-derived protein 4 (Reg4) of Rattus norvegicus (Rat).